Here is a 765-residue protein sequence, read N- to C-terminus: Eukaryotic translation initiation factor 3 subunit B (765 aa).

The segment at 1 to 136 (MKNFLPRTLK…LFVECGSMND (136 aa)) is sufficient for interaction with HCR1 and TIF32. Residues 28–261 (RNTQLKRSKI…GVTAWGGPNF (234 aa)) form a sufficient for interaction with PIC8 region. Serine 61 carries the post-translational modification Phosphoserine. Tyrosine 67 carries the post-translational modification Phosphotyrosine. Positions 77 to 162 (QYIVVNGAPV…HRLFLYTMKD (86 aa)) constitute an RRM domain. The residue at position 671 (serine 671) is a Phosphoserine.

Belongs to the eIF-3 subunit B family. Component of the eukaryotic translation initiation factor 3 (eIF-3) complex.

The protein resides in the cytoplasm. Its function is as follows. RNA-binding component of the eukaryotic translation initiation factor 3 (eIF-3) complex, which is involved in protein synthesis of a specialized repertoire of mRNAs and, together with other initiation factors, stimulates binding of mRNA and methionyl-tRNAi to the 40S ribosome. The eIF-3 complex specifically targets and initiates translation of a subset of mRNAs involved in cell proliferation. The chain is Eukaryotic translation initiation factor 3 subunit B from Saccharomyces cerevisiae (strain YJM789) (Baker's yeast).